We begin with the raw amino-acid sequence, 226 residues long: Small ribosomal subunit protein uS3 (226 aa).

Residues 39-109 form the KH type-2 domain; the sequence is IYKFFDKFTR…KLDVNLKVLT (71 aa).

This sequence belongs to the universal ribosomal protein uS3 family. Part of the 30S ribosomal subunit. Forms a tight complex with proteins S10 and S14.

In terms of biological role, binds the lower part of the 30S subunit head. Binds mRNA in the 70S ribosome, positioning it for translation. The polypeptide is Small ribosomal subunit protein uS3 (Mycoplasmopsis synoviae (strain 53) (Mycoplasma synoviae)).